An 876-amino-acid polypeptide reads, in one-letter code: Leucine--tRNA ligase (876 aa).

The short motif at 43 to 53 is the 'HIGH' region element; the sequence is PYPSGRIHMGH. Positions 632 to 636 match the 'KMSKS' region motif; sequence KMSKS. K635 is a binding site for ATP.

This sequence belongs to the class-I aminoacyl-tRNA synthetase family.

Its subcellular location is the cytoplasm. The enzyme catalyses tRNA(Leu) + L-leucine + ATP = L-leucyl-tRNA(Leu) + AMP + diphosphate. The polypeptide is Leucine--tRNA ligase (Sinorhizobium medicae (strain WSM419) (Ensifer medicae)).